The sequence spans 376 residues: WW domain-binding protein 4 (376 aa).

A Matrin-type zinc finger spans residues 11-42 (KFCDYCKCWIADNRPSVEFHERGKNHKENVAK). The span at 94–107 (ITPVTSTIPPTSTS) shows a compositional bias: low complexity. 3 disordered regions span residues 94–128 (ITPV…KGRW), 189–335 (SRWE…EPKV), and 356–376 (FKKR…GDDQ). WW domains lie at 122-155 (DPSK…KPEG) and 163-196 (TAVK…KPDD). Residues 189 to 198 (SRWEKPDDFI) are compositionally biased toward basic and acidic residues. Residues 203 to 215 (DLPSSKVNENSLG) show a composition bias toward polar residues. 2 stretches are compositionally biased toward basic and acidic residues: residues 218–229 (DESKSSDSHSDS) and 243–257 (ETEK…KNKN). Phosphoserine occurs at positions 220, 227, and 229. The residue at position 262 (S262) is a Phosphoserine. Over residues 298-309 (QEIKQEVESHEE) the composition is skewed to basic and acidic residues. The segment covering 316–326 (STENEYVSTSE) has biased composition (polar residues). Residues 357-375 (KKRRTENGKSRNLRQRGDD) form an interaction with SNRNP200 region. The span at 361–376 (TENGKSRNLRQRGDDQ) shows a compositional bias: basic and acidic residues.

Component of the spliceosome B complex. Associated with U2 snRNPs. Binds splicing factors SNRPB, SNRPC and SF1. Interacts via the WW domains with the Pro-rich domains of KHDRBS1/SAM68. Interacts via the WW domains with the Pro-rich domains of WBP11. Interacts with SNRNP200.

Its subcellular location is the nucleus. It is found in the nucleus speckle. In terms of biological role, involved in pre-mRNA splicing as a component of the spliceosome. May play a role in cross-intron bridging of U1 and U2 snRNPs in the mammalian A complex. In Homo sapiens (Human), this protein is WW domain-binding protein 4 (WBP4).